Here is a 491-residue protein sequence, read N- to C-terminus: tRNA-2-methylthio-N(6)-dimethylallyladenosine synthase (491 aa).

The 117-residue stretch at Arg3 to His119 folds into the MTTase N-terminal domain. Positions 12, 48, 82, 156, 160, and 163 each coordinate [4Fe-4S] cluster. In terms of domain architecture, Radical SAM core spans Arg142–Asp372. The 72-residue stretch at Lys375–Ile446 folds into the TRAM domain.

The protein belongs to the methylthiotransferase family. MiaB subfamily. In terms of assembly, monomer. [4Fe-4S] cluster is required as a cofactor.

It localises to the cytoplasm. The catalysed reaction is N(6)-dimethylallyladenosine(37) in tRNA + (sulfur carrier)-SH + AH2 + 2 S-adenosyl-L-methionine = 2-methylsulfanyl-N(6)-dimethylallyladenosine(37) in tRNA + (sulfur carrier)-H + 5'-deoxyadenosine + L-methionine + A + S-adenosyl-L-homocysteine + 2 H(+). Its function is as follows. Catalyzes the methylthiolation of N6-(dimethylallyl)adenosine (i(6)A), leading to the formation of 2-methylthio-N6-(dimethylallyl)adenosine (ms(2)i(6)A) at position 37 in tRNAs that read codons beginning with uridine. This is tRNA-2-methylthio-N(6)-dimethylallyladenosine synthase from Saccharopolyspora erythraea (strain ATCC 11635 / DSM 40517 / JCM 4748 / NBRC 13426 / NCIMB 8594 / NRRL 2338).